Reading from the N-terminus, the 222-residue chain is Charged multivesicular body protein 4b (222 aa).

Disordered regions lie at residues 1–21 (MSLI…PSPQ) and 183–222 (GPET…WATA). Positions 21–182 (QEAIQKLRDT…ELDKNLLEVQ (162 aa)) form a coiled coil. The span at 188 to 200 (PLPNVPAAVLPAK) shows a compositional bias: low complexity.

The protein belongs to the SNF7 family. As to quaternary structure, probable core component of the endosomal sorting required for transport complex III (ESCRT-III). ESCRT-III components are thought to multimerize to form a flat lattice on the perimeter membrane of the endosome.

It localises to the cytoplasm. The protein localises to the cytosol. It is found in the late endosome membrane. Its subcellular location is the midbody. Functionally, probable core component of the endosomal sorting required for transport complex III (ESCRT-III) which is involved in multivesicular bodies (MVBs) formation and sorting of endosomal cargo proteins into MVBs. MVBs contain intraluminal vesicles (ILVs) that are generated by invagination and scission from the limiting membrane of the endosome and mostly are delivered to lysosomes enabling degradation of membrane proteins, such as stimulated growth factor receptors, lysosomal enzymes and lipids. The polypeptide is Charged multivesicular body protein 4b (chmp4b) (Xenopus tropicalis (Western clawed frog)).